Consider the following 388-residue polypeptide: Ribonucleoside-diphosphate reductase subunit beta (388 aa).

The Fe cation site is built by aspartate 84, glutamate 115, and histidine 118. Tyrosine 122 is an active-site residue. Positions 212, 247, and 250 each coordinate Fe cation.

This sequence belongs to the ribonucleoside diphosphate reductase small chain family. As to quaternary structure, heterodimer of a large and a small subunit. Fe cation serves as cofactor.

The catalysed reaction is a 2'-deoxyribonucleoside 5'-diphosphate + [thioredoxin]-disulfide + H2O = a ribonucleoside 5'-diphosphate + [thioredoxin]-dithiol. Functionally, provides the precursors necessary for DNA synthesis. Catalyzes the biosynthesis of deoxyribonucleotides from the corresponding ribonucleotides. The protein is Ribonucleoside-diphosphate reductase subunit beta (NRDB) of Escherichia coli (Bacteriophage T4).